The primary structure comprises 101 residues: Trp operon repressor homolog (101 aa).

The DNA-binding element occupies 59–82 (QREIAQKYGVSIAQITRGSNALKA).

Belongs to the TrpR family. Homodimer.

It localises to the cytoplasm. In terms of biological role, this protein is an aporepressor. When complexed with L-tryptophan it binds the operator region of the trp operon and prevents the initiation of transcription. The sequence is that of Trp operon repressor homolog from Chlamydia caviae (strain ATCC VR-813 / DSM 19441 / 03DC25 / GPIC) (Chlamydophila caviae).